The chain runs to 476 residues: H2.0-like homeobox protein (476 aa).

Disordered regions lie at residues 121–170 (HLPQ…SSKD), 328–401 (WRHS…HQTT), and 413–476 (TASS…LAGL). The segment covering 158 to 168 (HHSGSAPAPSS) has biased composition (low complexity). A DNA-binding region (homeobox) is located at residues 273–332 (RSWSRAVFSNLQRKGLEKRFEIQKYVTKPDRKQLAAMLGLTDAQVKVWFQNRRMKWRHSK). 2 stretches are compositionally biased toward basic and acidic residues: residues 331–346 (SKEAQAQKDKDKEAGE) and 355–368 (EGEREERSPSRSEG). The segment covering 369 to 379 (EAESESSDSES) has biased composition (acidic residues). Residues 386–397 (DTERTEGTERSL) show a composition bias toward basic and acidic residues. Low complexity predominate over residues 413 to 446 (TASSSASGSSFSFSSSSSLGSSNGSAGSASSLGS). Positions 455–464 (HQPSVTSGPQ) are enriched in polar residues.

The protein belongs to the H2.0 homeobox family.

The protein localises to the nucleus. Functionally, transcription factor required for TBX21/T-bet-dependent maturation of Th1 cells as well as maintenance of Th1-specific gene expression. Involved in embryogenesis and hematopoiesis. The protein is H2.0-like homeobox protein (Hlx) of Rattus norvegicus (Rat).